The following is a 407-amino-acid chain: Methylthioribose kinase (407 aa).

Residues Asn-40, Lys-57, and 111–113 (EDL) each bind ATP. Residue Asp-229 coordinates substrate. 246-248 (DAE) contacts ATP. Arg-344 is a substrate binding site.

This sequence belongs to the methylthioribose kinase family. In terms of assembly, homodimer.

The catalysed reaction is 5-(methylsulfanyl)-D-ribose + ATP = 5-(methylsulfanyl)-alpha-D-ribose 1-phosphate + ADP + H(+). The protein operates within amino-acid biosynthesis; L-methionine biosynthesis via salvage pathway; S-methyl-5-thio-alpha-D-ribose 1-phosphate from S-methyl-5'-thioadenosine (hydrolase route): step 2/2. Functionally, catalyzes the phosphorylation of methylthioribose into methylthioribose-1-phosphate. The sequence is that of Methylthioribose kinase from Yersinia pestis bv. Antiqua (strain Angola).